The primary structure comprises 107 residues: Antimicrobial peptide microplusin (107 aa).

Residues 1–19 form the signal peptide; it reads MKSLLVCLVLAVVVLVASG. 3 cysteine pairs are disulfide-bonded: cysteine 25–cysteine 60, cysteine 38–cysteine 88, and cysteine 49–cysteine 54. Positions 86–107 are disordered; that stretch reads TDCDHSHGHEHSHGHEHGHGHH. Residues 87-107 show a composition bias toward basic and acidic residues; sequence DCDHSHGHEHSHGHEHGHGHH.

It localises to the secreted. Functionally, has bacteriostatic activity against Gram-positive bacteria, but not against Gram-negative bacteria. Has fungistatic activity against some but not all fungi. Binds and sequesters copper and iron ions. Copper-chelating is crucial for antimicrobial activity against M.luteus. The chain is Antimicrobial peptide microplusin from Ixodes scapularis (Black-legged tick).